The following is a 296-amino-acid chain: Small ribosomal subunit protein uS2 (296 aa).

The segment at 252 to 296 (TSSKTVSKLKQSKKLSKTQNIDEETNTEFDQALGGACENNNSDNT) is disordered.

Belongs to the universal ribosomal protein uS2 family.

This chain is Small ribosomal subunit protein uS2 (rpsB), found in Rickettsia prowazekii (strain Madrid E).